The chain runs to 219 residues: 2-phospho-L-lactate guanylyltransferase (219 aa).

Belongs to the CofC family. Homodimer.

It catalyses the reaction (2S)-2-phospholactate + GTP + H(+) = (2S)-lactyl-2-diphospho-5'-guanosine + diphosphate. Its pathway is cofactor biosynthesis; coenzyme F420 biosynthesis. Functionally, guanylyltransferase that catalyzes the activation of (2S)-2-phospholactate (2-PL) as (2S)-lactyl-2-diphospho-5'-guanosine, via the condensation of 2-PL with GTP. It is involved in the biosynthesis of coenzyme F420, a hydride carrier cofactor. The polypeptide is 2-phospho-L-lactate guanylyltransferase (Methanocella arvoryzae (strain DSM 22066 / NBRC 105507 / MRE50)).